The following is a 278-amino-acid chain: Dermonecrotic toxin Ls4SicTox-alphaIII1ii (278 aa).

The active site involves H5. E25 and D27 together coordinate Mg(2+). H40 (nucleophile) is an active-site residue. C44 and C50 form a disulfide bridge. D84 serves as a coordination point for Mg(2+).

Belongs to the arthropod phospholipase D family. Class I subfamily. Mg(2+) serves as cofactor. In terms of tissue distribution, expressed by the venom gland.

The protein resides in the secreted. The enzyme catalyses an N-(acyl)-sphingosylphosphocholine = an N-(acyl)-sphingosyl-1,3-cyclic phosphate + choline. It carries out the reaction an N-(acyl)-sphingosylphosphoethanolamine = an N-(acyl)-sphingosyl-1,3-cyclic phosphate + ethanolamine. It catalyses the reaction a 1-acyl-sn-glycero-3-phosphocholine = a 1-acyl-sn-glycero-2,3-cyclic phosphate + choline. The catalysed reaction is a 1-acyl-sn-glycero-3-phosphoethanolamine = a 1-acyl-sn-glycero-2,3-cyclic phosphate + ethanolamine. In terms of biological role, dermonecrotic toxins cleave the phosphodiester linkage between the phosphate and headgroup of certain phospholipids (sphingolipid and lysolipid substrates), forming an alcohol (often choline) and a cyclic phosphate. This toxin acts on sphingomyelin (SM). It may also act on ceramide phosphoethanolamine (CPE), lysophosphatidylcholine (LPC) and lysophosphatidylethanolamine (LPE), but not on lysophosphatidylserine (LPS), and lysophosphatidylglycerol (LPG). It acts by transphosphatidylation, releasing exclusively cyclic phosphate products as second products. Induces dermonecrosis, hemolysis, increased vascular permeability, edema, inflammatory response, and platelet aggregation. This Loxosceles sp. (strain 4 GJB-2008) (Recluse spider) protein is Dermonecrotic toxin Ls4SicTox-alphaIII1ii.